The primary structure comprises 129 residues: uncharacterized protein (129 aa).

The VOC domain maps to 6-129 (QVHHIAIIAT…DGLPLELYEQ (124 aa)). Positions 9, 57, 78, and 125 each coordinate a divalent metal cation.

To B.subtilis YwkD.

This is an uncharacterized protein from Escherichia coli (strain K12).